The sequence spans 157 residues: Crossover junction endodeoxyribonuclease RuvC (157 aa).

Catalysis depends on residues Asp7, Glu66, and Asp139. Residues Asp7, Glu66, and Asp139 each contribute to the Mg(2+) site.

It belongs to the RuvC family. As to quaternary structure, homodimer which binds Holliday junction (HJ) DNA. The HJ becomes 2-fold symmetrical on binding to RuvC with unstacked arms; it has a different conformation from HJ DNA in complex with RuvA. In the full resolvosome a probable DNA-RuvA(4)-RuvB(12)-RuvC(2) complex forms which resolves the HJ. Requires Mg(2+) as cofactor.

The protein resides in the cytoplasm. It catalyses the reaction Endonucleolytic cleavage at a junction such as a reciprocal single-stranded crossover between two homologous DNA duplexes (Holliday junction).. Functionally, the RuvA-RuvB-RuvC complex processes Holliday junction (HJ) DNA during genetic recombination and DNA repair. Endonuclease that resolves HJ intermediates. Cleaves cruciform DNA by making single-stranded nicks across the HJ at symmetrical positions within the homologous arms, yielding a 5'-phosphate and a 3'-hydroxyl group; requires a central core of homology in the junction. The consensus cleavage sequence is 5'-(A/T)TT(C/G)-3'. Cleavage occurs on the 3'-side of the TT dinucleotide at the point of strand exchange. HJ branch migration catalyzed by RuvA-RuvB allows RuvC to scan DNA until it finds its consensus sequence, where it cleaves and resolves the cruciform DNA. This chain is Crossover junction endodeoxyribonuclease RuvC, found in Helicobacter pylori (strain P12).